A 329-amino-acid polypeptide reads, in one-letter code: Mas-related G-protein coupled receptor member X2 (329 aa).

Residues 1 to 33 are Extracellular-facing; sequence MDPTTPAWGTESTTMNGNDQALPLFCGKETLIS. Residues 34–54 form a helical membrane-spanning segment; it reads VFLILFIALVGLVGNGFVLWL. Over 55–63 the chain is Cytoplasmic; it reads LGFRMRKNA. A helical transmembrane segment spans residues 64–84; the sequence is FSVYVLSLAGADFLFLCFQII. Residues 85–96 are Extracellular-facing; that stretch reads NCLVYLSNVFCS. A helical membrane pass occupies residues 97–117; it reads ISINFPSFFITVMTCAYLAGL. Residues 118 to 144 are Cytoplasmic-facing; sequence SMLSTISTERCLSVLWPIWYRCRRPRH. The chain crosses the membrane as a helical span at residues 145–165; sequence LSAVACVLLWALSLLLSILEG. The Extracellular segment spans residues 166-183; it reads KFCGLFGDGDSGWCQTFD. A helical transmembrane segment spans residues 184–204; the sequence is LITAAWLIFLFMVLCGSSLAL. Topologically, residues 205–227 are cytoplasmic; sequence LVRILCGSRGLPLTRLYLTILLT. The helical transmembrane segment at 228–248 threads the bilayer; that stretch reads VLVFLLCGLPFGIQWFLILWI. Over 249–263 the chain is Extracellular; the sequence is WKNSDVLFCHIHPVS. Residues 264-284 traverse the membrane as a helical segment; it reads VVLSSLNSSANPIIYFFVGSF. The Cytoplasmic segment spans residues 285–329; it reads RKQWRLQQPILKLALQRALQDIAEVDHSEGCFRQGTPEMSRSSLV.

This sequence belongs to the G-protein coupled receptor 1 family. Mas subfamily.

Its subcellular location is the cell membrane. Mast cell-specific receptor for basic secretagogues, i.e. cationic amphiphilic drugs, as well as endo- or exogenous peptides, consisting of a basic head group and a hydrophobic core. Recognizes and binds small molecules containing a cyclized tetrahydroisoquinoline (THIQ), such as non-steroidal neuromuscular blocking drugs (NMBDs), including tubocurarine and atracurium. In response to these compounds, mediates pseudo-allergic reactions characterized by histamine release, inflammation and airway contraction. In Pan troglodytes (Chimpanzee), this protein is Mas-related G-protein coupled receptor member X2 (MRGPRX2).